We begin with the raw amino-acid sequence, 38 residues long: Glucagon-like peptide (38 aa).

It belongs to the glucagon family.

It localises to the secreted. This is Glucagon-like peptide from Hydrolagus colliei (Spotted ratfish).